The sequence spans 1416 residues: Telomere-associated protein RIF1 (1416 aa).

4 disordered regions span residues 789-858, 886-984, 1021-1054, and 1166-1186; these read PIRK…PVVQ, PEVA…HLTG, ARAQ…QAPP, and TART…APEE. Positions 928–945 are enriched in low complexity; it reads GSSGDPAASAGAVAAGEM. The segment covering 1029–1050 has biased composition (polar residues); that stretch reads QVSTPTSELNELTGTDHTSTPI.

The protein belongs to the RIF1 family. Highly divergent. In terms of assembly, interacts with Pp1-87b. Interacts with SuUR (via SNF2-like region). In terms of processing, phosphorylated, probably by Cdk1; phosphorylation regulates dissociation from heterochromatin. In terms of tissue distribution, expressed in nurse cells and follicle cells in the adult female (at protein level). Detected in adult at extremely low levels.

The protein resides in the nucleus. Its subcellular location is the chromosome. It is found in the telomere. Its function is as follows. Regulates the timing of initiation of DNA replication. Functions in copy number control by promoting the underreplication of DNA, which is found in many late replicating euchromatic regions of salivary gland polytene chromosomes. Promotes underreplication by localizing to active DNA replication forks in a partially SuUR-dependent manner, and inhibiting replication fork progression. Might also work as an adapter to recruit Pp1-87B to multiple sites on the chromosome and may function with Pp1-87B to mediate underreplication. Plays an essential role in embryonic development, in the transition from larvae to pupae and, probably, in proliferating tissues later on. In embryos, during mid-blastula transition, binds to and selectively delays the replication of large blocks of repetitive DNA satellite sequences during S phase in response to the activity of Cdk1; maternal Rif1 is specifically required for the normal extension of S phase 14. Unlike mammalian orthologs, does not appear to play a role in DNA damage repair. The protein is Telomere-associated protein RIF1 of Drosophila melanogaster (Fruit fly).